The chain runs to 285 residues: Baculoviral IAP repeat-containing protein 7 (285 aa).

The segment at glutamate 18 to histidine 47 is disordered. Residues serine 19 to histidine 47 show a composition bias toward basic and acidic residues. The stretch at arginine 96 to leucine 161 is one BIR repeat. Zn(2+) is bound by residues cysteine 130, cysteine 133, histidine 150, and cysteine 157. The interval glutamine 184–aspartate 225 is disordered. An RING-type zinc finger spans residues cysteine 239 to arginine 273.

Belongs to the IAP family. In terms of assembly, binds to caspase-9. Interaction with DIABLO/SMAC via the BIR domain disrupts binding to caspase-9 and apoptotic suppressor activity. Interacts with TAB1. In vitro, interacts with caspase-3 and caspase-7 via its BIR domain. Autoubiquitinated and undergoes proteasome-mediated degradation. In terms of processing, the truncated protein (tLivin) not only loses its anti-apoptotic effect but also acquires a pro-apoptotic effect.

The protein resides in the nucleus. The protein localises to the cytoplasm. It is found in the golgi apparatus. It catalyses the reaction S-ubiquitinyl-[E2 ubiquitin-conjugating enzyme]-L-cysteine + [acceptor protein]-L-lysine = [E2 ubiquitin-conjugating enzyme]-L-cysteine + N(6)-ubiquitinyl-[acceptor protein]-L-lysine.. Functionally, apoptotic regulator capable of exerting proapoptotic and anti-apoptotic activities and plays crucial roles in apoptosis, cell proliferation, and cell cycle control. Its anti-apoptotic activity is mediated through the inhibition of CASP3, CASP7 and CASP9, as well as by its E3 ubiquitin-protein ligase activity. As it is a weak caspase inhibitor, its anti-apoptotic activity is thought to be due to its ability to ubiquitinate DIABLO/SMAC targeting it for degradation thereby promoting cell survival. May contribute to caspase inhibition, by blocking the ability of DIABLO/SMAC to disrupt XIAP/BIRC4-caspase interactions. Protects against apoptosis induced by TNF or by chemical agents such as adriamycin, etoposide or staurosporine. Suppression of apoptosis is mediated by activation of MAPK8/JNK1, and possibly also of MAPK9/JNK2. This activation depends on TAB1 and MAP3K7/TAK1. In vitro, inhibits CASP3 and proteolytic activation of pro-CASP9. The sequence is that of Baculoviral IAP repeat-containing protein 7 (Birc7) from Mus musculus (Mouse).